The chain runs to 345 residues: MRVTDFSFELPDELIARYPMPERTSSRLLSLEGNSGKLGDNQFTDILDMVNPGDLMVFNNTRVIPARLFGQKETGGKLEILVERMLDDKRILAHVRSSKSPKVNTKVCLDGGYEMTMLARHDALFELELNDEKTILEVLEKVGHMPLPPYIDRPDEDADKERYQTVYNDAPGAVAAPTAGLHFDDALLNRLKEKGVDTAFVTLHVGAGTFQPVKVDDVLDHKMHSEWAEVSQEVVDKIAHTKAHGGRVIAVGTTSVRSLESAAKASEDELQPFCRDTDIFIYPGYEFKVVDAMVTNFHLPESTLIMLLSAFAGFDEVKNAYQHAIAQKYRFFSYGDAMFVTKKAN.

It belongs to the QueA family. As to quaternary structure, monomer.

It is found in the cytoplasm. It carries out the reaction 7-aminomethyl-7-carbaguanosine(34) in tRNA + S-adenosyl-L-methionine = epoxyqueuosine(34) in tRNA + adenine + L-methionine + 2 H(+). Its pathway is tRNA modification; tRNA-queuosine biosynthesis. Functionally, transfers and isomerizes the ribose moiety from AdoMet to the 7-aminomethyl group of 7-deazaguanine (preQ1-tRNA) to give epoxyqueuosine (oQ-tRNA). The sequence is that of S-adenosylmethionine:tRNA ribosyltransferase-isomerase from Shewanella woodyi (strain ATCC 51908 / MS32).